Here is a 380-residue protein sequence, read N- to C-terminus: Probable protein phosphatase 2C 27 (380 aa).

Residues 84 to 344 enclose the PPM-type phosphatase domain; it reads RSGSCAEQGA…DNLTVIVVCF (261 aa). Positions 128, 129, 292, and 335 each coordinate Mn(2+).

It belongs to the PP2C family. Mg(2+) is required as a cofactor. It depends on Mn(2+) as a cofactor. Expressed in roots, leaves, stems, flower, and trichomes.

Its subcellular location is the nucleus. The protein localises to the cytoplasm. It carries out the reaction O-phospho-L-seryl-[protein] + H2O = L-seryl-[protein] + phosphate. The enzyme catalyses O-phospho-L-threonyl-[protein] + H2O = L-threonyl-[protein] + phosphate. In terms of biological role, confers salt tolerance by triggering the expression of stress-responsive genes. The protein is Probable protein phosphatase 2C 27 of Arabidopsis thaliana (Mouse-ear cress).